A 234-amino-acid chain; its full sequence is Sugar fermentation stimulation protein A (234 aa).

The segment at residues 201 to 220 (LLSEAQNKGVEVLAYKAELS) is a DNA-binding region (H-T-H motif).

The protein belongs to the SfsA family.

Binds to DNA non-specifically. Could be a regulatory factor involved in maltose metabolism. The polypeptide is Sugar fermentation stimulation protein A (Salmonella gallinarum (strain 287/91 / NCTC 13346)).